The primary structure comprises 515 residues: 1-pyrroline-5-carboxylate dehydrogenase (515 aa).

Active-site residues include glutamate 286 and cysteine 320.

It belongs to the aldehyde dehydrogenase family. RocA subfamily.

It carries out the reaction L-glutamate 5-semialdehyde + NAD(+) + H2O = L-glutamate + NADH + 2 H(+). The protein operates within amino-acid degradation; L-proline degradation into L-glutamate; L-glutamate from L-proline: step 2/2. In Oceanobacillus iheyensis (strain DSM 14371 / CIP 107618 / JCM 11309 / KCTC 3954 / HTE831), this protein is 1-pyrroline-5-carboxylate dehydrogenase.